We begin with the raw amino-acid sequence, 530 residues long: Chaperone Ric-8A (530 aa).

Residue serine 435 is modified to Phosphoserine. Phosphothreonine occurs at positions 440 and 442. Serine 501, serine 522, serine 523, and serine 527 each carry phosphoserine.

The protein belongs to the synembryn family. As to quaternary structure, interacts with GDP-bound G alpha proteins GNAI1, GNAO1 and GNAQ, and with GNA13 with lower affinity. Does not interact with G-alpha proteins when they are in complex with subunits beta and gamma. Interacts (via C-terminus) with RGS14; the interaction stimulates the dissociation of the complex between RGS14 and the active GTP-bound form of GNAI1. Interacts with NCS1; interaction is favored in the absence of Ca(2+) and myristoylation of NCS1 is not required. In terms of processing, phosphorylated at Ser-435 and Thr-440 by CK2, stabilizing its interface with G alpha proteins.

The protein resides in the cytoplasm. It localises to the cell cortex. Functionally, chaperone that specifically binds and folds nascent G alpha proteins prior to G protein heterotrimer formation, promoting their stability and activity: folds GNAI1, GNAO1, GNA13 and GNAQ. Does not fold G(s) G-alpha proteins GNAS nor GNAL. Also acts as a guanine nucleotide exchange factor (GEF) for G alpha proteins by stimulating exchange of bound GDP for free GTP. Involved in regulation of microtubule pulling forces during mitotic movement of chromosomes by stimulating G(i)-alpha protein (GNAI1), possibly leading to release G(i)-alpha-GTP and NuMA proteins from the NuMA-GPSM2-G(i)-alpha-GDP complex. Also acts as an activator for G(q)-alpha (GNAQ) protein by enhancing the G(q)-coupled receptor-mediated ERK activation. This Macaca fascicularis (Crab-eating macaque) protein is Chaperone Ric-8A (RIC8A).